The sequence spans 1009 residues: MGSRIKQNPETTFEVYVEVAYPRTGGTLSDPEVQRQFPEDYSDQEVLQTLTKFCFPFYVDSLTVSQVGQNFTFVLTDIDSKQRFGFCRLSSGAKSCFCILSYLPWFEVFYKLLNILADYTTKRQENQWNELLETLHKLPIPDPGVSVHLSVHSYFTVPDTRELPSIPENRNLTEYFVAVDVNNMLHLYASMLYERRILIICSKLSTLTACIHGSAAMLYPMYWQHVYIPVLPPHLLDYCCAPMPYLIGIHLSLMEKVRNMALDDVVILNVDTNTLETPFDDLQSLPNDVISSLKNRLKKVSTTTGDGVARAFLKAQAAFFGSYRNALKIEPEEPITFCEEAFVSHYRSGAMRQFLQNATQLQLFKQFIDGRLDLLNSGEGFSDVFEEEINMGEYAGSDKLYHQWLSTVRKGSGAILNTVKTKANPAMKTVYKFAKDHAKMGIKEVKNRLKQKDIAENGCAPTPEEQLPKTAPSPLVEAKDPKLREDRRPITVHFGQVRPPRPHVVKRPKSNIAVEGRRTSVPSPEQPQPYRTLRESDSAEGDEAESPEQQVRKSTGPVPAPPDRAASIDLLEDVFSNLDMEAALQPLGQAKSLEDLRAPKDLREQPGTFDYQRLDLGGSERSRGVTVALKLTHPYNKLWSLGQDDMAIPSKPPAASPEKPSALLGNSLALPRRPQNRDSILNPSDKEEVPTPTLGSITIPRPQGRKTPELGIVPPPPIPRPAKLQAAGAALGDVSERLQTDRDRRAALSPGLLPGVVPQGPTELLQPLSPGPGAAGTSSDALLALLDPLSTAWSGSTLPSRPATPNVATPFTPQFSFPPAGTPTPFPQPPLNPFVPSMPAAPPTLPLVSTPAGPFGAPPASLGPAFASGLLLSSAGFCAPHRSQPNLSALSMPNLFGQMPMGTHTSPLQPLGPPAVAPSRIRTLPLARSSARAAETKQGLALRPGDPPLLPPRPPQGLEPTLQPSAPQQARDPFEDLLQKTKQDVSPSPALAPAPDSVEQLRKQWETFE.

Residues 13 to 145 (FEVYVEVAYP…HKLPIPDPGV (133 aa)) enclose the uDENN domain. In terms of domain architecture, cDENN spans 162–298 (ELPSIPENRN…VISSLKNRLK (137 aa)). Residues 300 to 378 (VSTTTGDGVA…DGRLDLLNSG (79 aa)) form the dDENN domain. The FXDXF motif signature appears at 381–385 (FSDVF). The tract at residues 453–564 (DIAENGCAPT…TGPVPAPPDR (112 aa)) is disordered. Ser473 carries the phosphoserine modification. Residues 477–489 (EAKDPKLREDRRP) show a composition bias toward basic and acidic residues. Basic residues predominate over residues 500–509 (PRPHVVKRPK). Residue Thr519 is modified to Phosphothreonine. Ser520, Ser523, Ser536, Ser538, and Ser546 each carry phosphoserine. A Clathrin box motif is present at residues 569-578 (DLLEDVFSNL). The residue at position 592 (Ser592) is a Phosphoserine. A disordered region spans residues 648–714 (IPSKPPAASP…RKTPELGIVP (67 aa)). The residue at position 749 (Ser749) is a Phosphoserine. Disordered stretches follow at residues 796-831 (STLPSRPATPNVATPFTPQFSFPPAGTPTPFPQPPL) and 928-1009 (RSSA…ETFE). Pro residues-rich tracts occupy residues 820 to 831 (AGTPTPFPQPPL) and 945 to 957 (GDPPLLPPRPPQG). The segment covering 972–983 (DPFEDLLQKTKQ) has biased composition (basic and acidic residues). Positions 986–997 (SPSPALAPAPDS) are enriched in low complexity. Residues 999–1009 (EQLRKQWETFE) are compositionally biased toward basic and acidic residues.

Interacts with RAB35. Interacts with clathrin and with the adapter protein complex 2, AP-2. Interacts with ITSN1 and SH3GL2. Interacts (when phosphorylated) with YWHAE. In terms of processing, phosphorylated on serine and/or threonine in an Akt-dependent manner. Phosphorylation probably regulates the guanine nucleotide exchange factor (GEF) activity, possibly by disrupting an intramolecular interaction between the DENN domain and the C-terminus of the protein, thereby relieving the autoinhibition.

The protein localises to the cytoplasmic vesicle. The protein resides in the clathrin-coated vesicle membrane. It is found in the presynaptic cell membrane. With respect to regulation, the guanine nucleotide exchange factor (GEF) activity is autoinhibited. Autoinhibition may be the result of intramolecular interaction between the DENN domain and the C-terminus, which is disrupted upon phosphorylation. Activation is regulated by Akt activation. Guanine nucleotide exchange factor (GEF) regulating clathrin-mediated endocytosis through RAB35 activation. Promotes the exchange of GDP to GTP, converting inactive GDP-bound RAB35 into its active GTP-bound form. Regulates clathrin-mediated endocytosis of synaptic vesicles and mediates exit from early endosomes. Binds phosphatidylinositol-phosphates (PtdInsPs), with some preference for PtdIns(3)P. The protein is DENN domain-containing protein 1A of Homo sapiens (Human).